A 476-amino-acid chain; its full sequence is MEFEAVIGLEVHVELLTETKIYCGCSTAFGSEPNKHVCPVCLGLPGSLPRLNKKVVEYAIKAGLALNCSINNKSRMDRKNYFYADCPKNYQITQQEIPICREGFIEIRNHLGEKKRIGIERIHMEEDAGKLIHTDEGTLIDYNRAGIPLIEIVSKPDIRTSKEAVSYLEDLRNILKFIGVSDCKMEQGSLRCDCNISIRPKHNLKLGVKTEIKNMNSFKALEKAIQYEYKRQSDLIESGEKVRQETRRWNDAKNVTEVMRSKEYANDYRYFPEGDLTAINISDNYIDNIRKTIPELPDKKIDRFVEEFKISRKEIEILILNMEIGDFFENAAKLSGDPKSVSNWITGDISRLAKETGIPLNNLNFTERDLAELIEFINCGVISNNIGKKVIEEMFYKGKSPRQIIHEKGFVQNSSKEKILKVVKEVMEENPKSIEDYKKGKKKAVKFMIGMVMKKTKGNANPMLVNKLVEEEIGKY.

This sequence belongs to the GatB/GatE family. GatB subfamily. Heterotrimer of A, B and C subunits.

The catalysed reaction is L-glutamyl-tRNA(Gln) + L-glutamine + ATP + H2O = L-glutaminyl-tRNA(Gln) + L-glutamate + ADP + phosphate + H(+). The enzyme catalyses L-aspartyl-tRNA(Asn) + L-glutamine + ATP + H2O = L-asparaginyl-tRNA(Asn) + L-glutamate + ADP + phosphate + 2 H(+). Its function is as follows. Allows the formation of correctly charged Asn-tRNA(Asn) or Gln-tRNA(Gln) through the transamidation of misacylated Asp-tRNA(Asn) or Glu-tRNA(Gln) in organisms which lack either or both of asparaginyl-tRNA or glutaminyl-tRNA synthetases. The reaction takes place in the presence of glutamine and ATP through an activated phospho-Asp-tRNA(Asn) or phospho-Glu-tRNA(Gln). This Clostridium kluyveri (strain ATCC 8527 / DSM 555 / NBRC 12016 / NCIMB 10680 / K1) protein is Aspartyl/glutamyl-tRNA(Asn/Gln) amidotransferase subunit B.